Reading from the N-terminus, the 178-residue chain is PRA1 family protein 2 (178 aa).

At 1-41 the chain is on the cytoplasmic side; sequence MSEVRLPPLRALDDFVLGSARLAAPDPCDPQRWCHRVINNL. The chain crosses the membrane as a helical span at residues 42-62; it reads LYYQTNYLLCFGIGLALAGYV. Residues 63 to 64 lie on the Extracellular side of the membrane; sequence RP. A helical membrane pass occupies residues 65–85; sequence LHTLLSALVVAVALGVLVWAA. Residues 86–96 are Cytoplasmic-facing; the sequence is ETRAAVRRCRR. A helical transmembrane segment spans residues 97–119; that stretch reads SHPAACLAAVLAVGLLVLWVAGG. The Extracellular segment spans residues 120 to 122; the sequence is ACT. Residues 123-140 form a helical membrane-spanning segment; the sequence is FLFSIAGPVLLILVHASL. The Cytoplasmic segment spans residues 141-178; it reads RLRNLKNKIENKIESIGLKRTPMGLLLEALGQEQEAGS.

It belongs to the PRA1 family. As to quaternary structure, interacts with CCR5 and GDE1. Strong expression in the brain, small intestine, lung, spleen, and pancreas as well as in tumor tissues of the breast, colon, lung and ovary, with a weaker expression in normal tissues of the same patient. High expression in neuroblastic tumors. Strongly expressed in Purkinje cells and more moderately in cells of the molecular and the granular layers in the cerebellum. Detected in neuronal cells, but not in non-neuronal cells in the cerebral cortex, hippocampus, and lateral ventricles.

The protein localises to the endosome membrane. Functionally, may be involved in ER/Golgi transport and vesicular traffic. Plays a proapoptotic role in cerulenin-induced neuroblastoma apoptosis. The protein is PRA1 family protein 2 (PRAF2) of Homo sapiens (Human).